The chain runs to 61 residues: Protein transport protein Sec61 subunit beta (61 aa).

Topologically, residues 1-35 are cytoplasmic; that stretch reads MKRPSTQRAPATVNKGGNSMMKFYSEDAIGLKVGP. A helical transmembrane segment spans residues 36–56; it reads TAVLFMSLIFIAFVIILHIMG. The Extracellular segment spans residues 57 to 61; the sequence is KYTRS.

The protein belongs to the SEC61-beta family. In terms of assembly, the SEC61 channel-forming translocon complex.

It is found in the endoplasmic reticulum membrane. Its function is as follows. Component of SEC61 channel-forming translocon complex that mediates transport of signal peptide-containing precursor polypeptides across the endoplasmic reticulum (ER). Forms a ribosome receptor and a gated pore in the ER membrane, both functions required for cotranslational translocation of nascent polypeptides. The protein is Protein transport protein Sec61 subunit beta (sec61b) of Dictyostelium discoideum (Social amoeba).